The sequence spans 112 residues: UPF0145 protein Acid_4599 (112 aa).

The protein belongs to the UPF0145 family.

The chain is UPF0145 protein Acid_4599 from Solibacter usitatus (strain Ellin6076).